We begin with the raw amino-acid sequence, 424 residues long: 3-phosphoshikimate 1-carboxyvinyltransferase (424 aa).

3-phosphoshikimate is bound by residues K21, S22, and R26. K21 provides a ligand contact to phosphoenolpyruvate. Residues G91 and R119 each contribute to the phosphoenolpyruvate site. 3-phosphoshikimate is bound by residues S164, Q166, D310, and K337. Phosphoenolpyruvate is bound at residue Q166. The active-site Proton acceptor is D310. The phosphoenolpyruvate site is built by R341 and R382.

It belongs to the EPSP synthase family. Monomer.

It is found in the cytoplasm. The enzyme catalyses 3-phosphoshikimate + phosphoenolpyruvate = 5-O-(1-carboxyvinyl)-3-phosphoshikimate + phosphate. The protein operates within metabolic intermediate biosynthesis; chorismate biosynthesis; chorismate from D-erythrose 4-phosphate and phosphoenolpyruvate: step 6/7. Catalyzes the transfer of the enolpyruvyl moiety of phosphoenolpyruvate (PEP) to the 5-hydroxyl of shikimate-3-phosphate (S3P) to produce enolpyruvyl shikimate-3-phosphate and inorganic phosphate. The polypeptide is 3-phosphoshikimate 1-carboxyvinyltransferase (Campylobacter curvus (strain 525.92)).